The chain runs to 604 residues: Kelch-like protein 15 (604 aa).

Positions 31–98 constitute a BTB domain; it reads LDVTLVIEDH…MYYGTIELSM (68 aa). The region spanning 133 to 237 is the BACK domain; it reads CAEIMRLLDD…TPSSVFEKVK (105 aa). Kelch repeat units lie at residues 328–379, 381–426, 428–473, 489–542, and 544–590; these read FVFL…VIGK, IYAV…VLNN, LFIT…NKSK, KLYV…VLDK, and IMVL…VCNL.

As to quaternary structure, homodimer. Dimerization does not affect PPP2R5B-binding, but is required for its proteasomal degradation. Interacts with CUL3. Directly interacts with PPP2R5B; this interaction leads to PPP2R5B proteasomal degradation. Interacts with RBBP8/CtIP; this interaction leads to RBBP8 proteasomal degradation. Interacts with PACMP micropeptide; interaction prevents ubiquitination and degradation of RBBP8/CtIP.

It is found in the nucleus. It functions in the pathway protein modification; protein ubiquitination. Functionally, substrate-specific adapter for CUL3 E3 ubiquitin-protein ligase complex. Acts as an adapter for CUL3 to target the serine/threonine-protein phosphatase 2A (PP2A) subunit PPP2R5B for ubiquitination and subsequent proteasomal degradation, thus promoting exchange with other regulatory subunits and regulating PP2A holoenzyme composition. Acts as an adapter for CUL3 to target the DNA-end resection factor RBBP8/CtIP for ubiquitination and subsequent proteasomal degradation. Through the regulation of RBBP8/CtIP protein turnover, plays a key role in DNA damage response, favoring DNA double-strand repair through error-prone non-homologous end joining (NHEJ) over error-free, RBBP8-mediated homologous recombination (HR). The protein is Kelch-like protein 15 (Klhl15) of Mus musculus (Mouse).